Reading from the N-terminus, the 680-residue chain is DNA ligase (680 aa).

Residues 35–39 (DAQYD), 84–85 (SL), and Glu-115 each bind NAD(+). Lys-117 acts as the N6-AMP-lysine intermediate in catalysis. NAD(+)-binding residues include Arg-138, Glu-174, Lys-291, and Lys-315. Cys-419, Cys-422, Cys-437, and Cys-442 together coordinate Zn(2+). Positions 601–680 (NKNMPFSGME…REFINMLEQS (80 aa)) constitute a BRCT domain.

It belongs to the NAD-dependent DNA ligase family. LigA subfamily. Requires Mg(2+) as cofactor. Mn(2+) is required as a cofactor.

The catalysed reaction is NAD(+) + (deoxyribonucleotide)n-3'-hydroxyl + 5'-phospho-(deoxyribonucleotide)m = (deoxyribonucleotide)n+m + AMP + beta-nicotinamide D-nucleotide.. Functionally, DNA ligase that catalyzes the formation of phosphodiester linkages between 5'-phosphoryl and 3'-hydroxyl groups in double-stranded DNA using NAD as a coenzyme and as the energy source for the reaction. It is essential for DNA replication and repair of damaged DNA. This chain is DNA ligase, found in Dehalococcoides mccartyi (strain ATCC BAA-2100 / JCM 16839 / KCTC 5957 / BAV1).